Here is a 553-residue protein sequence, read N- to C-terminus: MAAAVAIEEQKKDIIFRSKLPDIYIPKNLPLHSYCFENISKFSSRPCLINGATDEIFTYADVELISRRVGSGLSKLGIKQGDTIMILLPNSPEFVFAFLGASFIGSISTMANPFFTSTEVIKQAKASNAKLIITQGCYVDKVKDYACENGVKIISIDTTTTADDAANILHFSELTGADENEMPKVEISPDGVVALPYSSGTTGLPKGVMLTHKGLVTSVAQQVDGENPNLYMHSDDVLLCVLPLFHIYSLNSVLLCGLRAGSGILIMQKFEIVPFLELIQKYKVTIGPFVPPIVLAIAKSTVVDNYDLSSVRTVMSGAAPLGKELEDAVRAKFPNAKLGQGYGMTEAGPVLAMCLAFAKEPFDIKSGACGTVVRNAEMKIVDPETGSSLPRNHPGEICIRGDQIMKGYLNDPEATARTIDKEGWLHTGDIGYIDDDDELFIVDRLKELIKYKGFQVAPAELEALLLTHPCISDAAVVPMKDEAAGEVPVAFVVKSNGHNITEDEIKQFISKQVIFYKRINRVFFVEAIPKAPSGKILRKDLRARLAAAALPTN.

Residues S198, S199, G200, T201, T202, and K206 each coordinate ATP. 2 residues coordinate (E)-4-coumaroyl-AMP: Y248 and S252. K269 provides a ligand contact to CoA. The SBD1 stretch occupies residues 271-340 (EIVPFLELIQ…AKFPNAKLGQ (70 aa)). (E)-4-coumaroyl-AMP-binding residues include A318, Q340, G341, T345, and M353. Q340, G341, and T345 together coordinate ATP. The interval 341–408 (GYGMTEAGPV…IRGDQIMKGY (68 aa)) is SBD2. The ATP site is built by D429 and R444. (E)-4-coumaroyl-AMP-binding residues include K446 and K450. Residues K452 and G453 each contribute to the CoA site. K535 provides a ligand contact to ATP.

This sequence belongs to the ATP-dependent AMP-binding enzyme family. Mg(2+) serves as cofactor.

The catalysed reaction is (E)-4-coumarate + ATP + CoA = (E)-4-coumaroyl-CoA + AMP + diphosphate. The enzyme catalyses (E)-4-coumarate + ATP + H(+) = (E)-4-coumaroyl-AMP + diphosphate. It carries out the reaction (E)-4-coumaroyl-AMP + CoA = (E)-4-coumaroyl-CoA + AMP + H(+). It participates in phytoalexin biosynthesis; 3,4',5-trihydroxystilbene biosynthesis; 3,4',5-trihydroxystilbene from trans-4-coumarate: step 1/2. In terms of biological role, carboxylate--CoA ligase that may use 4-coumarate as substrate. Follows a two-step reaction mechanism, wherein the carboxylate substrate first undergoes adenylation by ATP, followed by a thioesterification in the presence of CoA to yield the final CoA thioester. The polypeptide is 4-coumarate--CoA ligase (Vanilla planifolia (Vanilla)).